The primary structure comprises 275 residues: Tryptophan synthase alpha chain (275 aa).

Catalysis depends on proton acceptor residues glutamate 60 and aspartate 71.

The protein belongs to the TrpA family. As to quaternary structure, tetramer of two alpha and two beta chains.

The catalysed reaction is (1S,2R)-1-C-(indol-3-yl)glycerol 3-phosphate + L-serine = D-glyceraldehyde 3-phosphate + L-tryptophan + H2O. The protein operates within amino-acid biosynthesis; L-tryptophan biosynthesis; L-tryptophan from chorismate: step 5/5. Functionally, the alpha subunit is responsible for the aldol cleavage of indoleglycerol phosphate to indole and glyceraldehyde 3-phosphate. This chain is Tryptophan synthase alpha chain, found in Prochlorococcus marinus (strain MIT 9313).